The following is a 601-amino-acid chain: Terpenoid synthase 17 (601 aa).

Positions 354, 358, 497, 501, and 505 each coordinate Mg(2+). Positions 354-358 (NDTCD) match the DDXXD motif; degenerate motif.

The protein belongs to the terpene synthase family. Tpsa subfamily. Requires Mg(2+) as cofactor. It depends on Mn(2+) as a cofactor. As to expression, expressed exclusively in flowers.

It localises to the cytoplasm. It functions in the pathway secondary metabolite biosynthesis; terpenoid biosynthesis. The sequence is that of Terpenoid synthase 17 (TPS17) from Arabidopsis thaliana (Mouse-ear cress).